The following is a 138-amino-acid chain: Large ribosomal subunit protein uL16c (138 aa).

Belongs to the universal ribosomal protein uL16 family. In terms of assembly, part of the 50S ribosomal subunit.

Its subcellular location is the plastid. The protein resides in the chloroplast. The chain is Large ribosomal subunit protein uL16c from Emiliania huxleyi (Coccolithophore).